A 331-amino-acid polypeptide reads, in one-letter code: Thioredoxin-like fold domain-containing protein MRL7, chloroplastic (331 aa).

The transit peptide at 1–59 (MSFFAVACSAPRSSMLLTGLNSSFSDMHRSPLFVFPVTISSRSVKRFAAVSSDSVLDPE) directs the protein to the chloroplast. Disordered stretches follow at residues 52-105 (SDSV…ADAV) and 141-160 (GVDE…EDPD). Positions 142-160 (VDEEEEEEEEMVVEEEDPD) are enriched in acidic residues.

In terms of assembly, component of the transcriptionally active chromosome (TAC) complexes. Interacts with FSD2 and PRDA1. Interacts with FSD3 and CITRX/TRXZ. Binds to PTAC12/HMR/PAP5. As to expression, expressed in leaves, shoots, stems, cauline leaves, flower buds, flowers and siliques.

Its subcellular location is the plastid. The protein localises to the chloroplast. The protein resides in the chloroplast stroma. It localises to the chloroplast nucleoid. It is found in the nucleus. In terms of biological role, plays an essential role in early steps of chloroplast development. Involved in the regulation of plastid gene expression. May positively regulate plastid-encoded RNA polymerase (PEP) activity through binding to FSD3 and CITRX/TRXZ. Involved in redox-mediated regulation of chloroplast development. Possesses disulfide reductase activity in vitro. Required for the proper function of the plastid transcriptional machinery and protein accumulation in thylakoid membranes. May function as molecular chaperone to ensure proper organization of the nucleoids in chloroplasts. May mediate some aspect of thylakoid structure or function that controls non-photochemical quenching (NPQ). Participates in the early light signaling events of photobody biogenesis in chloroplasts. May mediate the degradation of two repressors of chloroplast biogenesis, PIF1 and PIF3 in nucleus. Collaboratively with PTAC12/HMR/PAP5, involved in the regulation of thermoresponsive responses via the stabilization of PIF4 in the daytime to initiate thermomorphogenesis. The chain is Thioredoxin-like fold domain-containing protein MRL7, chloroplastic from Arabidopsis thaliana (Mouse-ear cress).